Here is a 910-residue protein sequence, read N- to C-terminus: von Willebrand factor A domain-containing protein DDB_G0292740 (910 aa).

Residues 63-194 (AYQYYNVSSF…SITIHITMIS (132 aa)) form the VIT domain. The disordered stretch occupies residues 297–318 (IKNNPHSDSDSDSDDEENKKEN). The 170-residue stretch at 346 to 515 (EFIFLIDCSG…DMETEVMKLL (170 aa)) folds into the VWFA domain. A compositionally biased stretch (low complexity) spans 703–719 (QYQQQQQQQQQNFNSGF). The tract at residues 703 to 815 (QYQQQQQQQQ…TQSESTPSND (113 aa)) is disordered. Pro residues predominate over residues 720–749 (APPPPPMMSSGPPPPPGSSFGAPPPPPPGG). Over residues 750–802 (AFPTSSISEKKSSSQSSSSYLPPTMSLSRKSSLSPSSPSKNYPSPKLSSPSLS) the composition is skewed to low complexity. The span at 803–815 (YGSTQSESTPSND) shows a compositional bias: polar residues.

This is von Willebrand factor A domain-containing protein DDB_G0292740 from Dictyostelium discoideum (Social amoeba).